A 358-amino-acid polypeptide reads, in one-letter code: MKITLLYGGRSAEHDVSVLSAFSVLNAIYYTYYQVQLIFISKEGQWVKGPLLTEKPTSKEDLHLTWDPSGKVTDGFTGRVINPGEIKEEGTIVFPVLHGPNGEDGTIQGFLETLNLPYVGAGVLTSACAMDKIMTKYILQAAGVPQVPYVPVLKNQWKENPKKIFDQCEGSLLYPMFVKPANMGSSVGISKAENREELQNALALAYQYDSRAIVEQGIEAREIEVAVLGNEDVRTTLPGEVVKDVAFYDYDAKYINNKIEMQIPAEVPEEVYQKAQEYAKIAYTMLGGSGLSRCDFFLTNKNELFLNELNTMPGFTQFSMYPLLWENMGLKYGDLIEELIQLGINRFNQRQGFFEANE.

Positions 136–341 (KYILQAAGVP…YGDLIEELIQ (206 aa)) constitute an ATP-grasp domain. Residue 169–224 (EGSLLYPMFVKPANMGSSVGISKAENREELQNALALAYQYDSRAIVEQGIEAREIE) coordinates ATP. D295, E308, and N310 together coordinate Mg(2+).

Belongs to the D-alanine--D-alanine ligase family. It depends on Mg(2+) as a cofactor. Mn(2+) is required as a cofactor.

It is found in the cytoplasm. It catalyses the reaction 2 D-alanine + ATP = D-alanyl-D-alanine + ADP + phosphate + H(+). It participates in cell wall biogenesis; peptidoglycan biosynthesis. Its function is as follows. Cell wall formation. The chain is D-alanine--D-alanine ligase from Enterococcus hirae (strain ATCC 9790 / DSM 20160 / JCM 8729 / LMG 6399 / NBRC 3181 / NCIMB 6459 / NCDO 1258 / NCTC 12367 / WDCM 00089 / R).